The chain runs to 165 residues: Protein NKG7 (165 aa).

4 helical membrane-spanning segments follow: residues 9–29 (LLGG…DFWF), 61–81 (FSIM…LSCF), 92–112 (LVST…MAVY), and 133–153 (FYLG…SLGA).

Belongs to the PMP-22/EMP/MP20 family. As to expression, expressed in activated T-cells, in kidney, liver, lung and pancreas. Not expressed in brain, heart, or skeletal muscle. Expressed at high levels in TCR gamma delta-expressing CTL clones, and in some TCR alpha beta-expressing CTL clones (both CD4+ and CD8+), but is not expressed in other TCR alpha beta-expressing CTL clones and in cell lines representing B-cells, monocytes, and myeloid cells.

It is found in the cell membrane. The protein resides in the cytolytic granule membrane. In terms of biological role, regulates cytotoxic granule exocytosis in effector lymphocytes, thus acting as a critical mediator of inflammation in a broad range of infectious and non-infectious diseases. Essential for cytotoxic degranulation of natural killer (NK) cells and CD8(+) T-cells and for the activation of CD4(+) T-cells following infection. Plays a critical role in CD8(+) T-cell and NK cell-mediated cytolysis of target cells and contributes to the cytolytic activity via the perforin/granzyme pathway by enhancing exocytosis of LAMP1-carrying lytic granules. Contributes to NK cell-mediated control of cancer metastasis. This is Protein NKG7 (NKG7) from Homo sapiens (Human).